Consider the following 95-residue polypeptide: Putative defensin-like protein 252 (95 aa).

Residues 1-27 (MRCVTSFVVLCILMFLVVNNVKVDVKA) form the signal peptide. Disulfide bonds link Cys34-Cys93, Cys45-Cys72, Cys56-Cys85, and Cys70-Cys87.

Belongs to the DEFL family.

Its subcellular location is the secreted. In Arabidopsis thaliana (Mouse-ear cress), this protein is Putative defensin-like protein 252 (SCRL13).